Here is a 153-residue protein sequence, read N- to C-terminus: Bacteriohemerythrin (153 aa).

7 residues coordinate Fe cation: H21, H57, E61, H76, H80, H115, and D120.

The protein belongs to the hemerythrin family. Monomer.

Its function is as follows. Oxygen-binding protein. May be involved in a storage mechanism or for delivery to oxygen-requiring enzymes. The oxygen-binding site contains two iron atoms. This is Bacteriohemerythrin from Pseudomonas aeruginosa (strain UCBPP-PA14).